Here is a 139-residue protein sequence, read N- to C-terminus: Small ribosomal subunit protein uS19 (139 aa).

It belongs to the universal ribosomal protein uS19 family.

Protein S19 forms a complex with S13 that binds strongly to the 16S ribosomal RNA. In Ignicoccus hospitalis (strain KIN4/I / DSM 18386 / JCM 14125), this protein is Small ribosomal subunit protein uS19.